Reading from the N-terminus, the 290-residue chain is Multiple sugar-binding transport system permease protein MsmF (290 aa).

7 helical membrane-spanning segments follow: residues 12–32 (GWTFLIVPLILQVVFFYFPMF), 72–92 (FTLVLTLALIVGEIVLGIIIA), 104–124 (FFRAWFFFPAVLSGLTVSLIF), 156–176 (VIASIFVLLWQGVAMPIILFL), 201–221 (FWSVELPYLLPSISMVFIMAL), 231–253 (IFALTGGGPNNSTTSLGLLVYNY), and 260–280 (YGYANAIALILFIIIGIVSVL). The ABC transmembrane type-1 domain maps to 70–281 (IGFTLVLTLA…IIIGIVSVLQ (212 aa)).

The protein belongs to the binding-protein-dependent transport system permease family. MalFG subfamily.

Its subcellular location is the cell membrane. Involved in a binding protein-dependent transport system responsible for the uptake of melibiose, raffinose and isomaltotriose. In Streptococcus mutans serotype c (strain ATCC 700610 / UA159), this protein is Multiple sugar-binding transport system permease protein MsmF (msmF).